The chain runs to 845 residues: MEAVDADLELLTSLLEENEAAESNSVESHEASSELDEYDELFDGDEDGSYHESDNGTEEQTVDGVEENFDTLFGDIDDINEEETVAPDTKKQSSVCQDKSKHELEDELRKMQEQMRKLQKQLQQTALAKTSSPGNPMKSPDNKLLLSGKTFQSGPLLERSLTVPKANLQDTPKRKQNLQDKSPLQKQMTSFLSPPDKSSTRPVSSTATQPVLNPVRSPVGQQYPVEKFSGLRLRKPRVSSSEMERKMNGRKLIRLAQLQNKIVTEKLEDEDWVTFGVIVKKITPQSSNNGKTFSIWRLNDLKNLDKYVSLFLFGDVHKEHWKTDQGTVIGLLNANPMKPKEGTDEVCLSVDNPQKVLLMGDAVDLGTCKARKKNGDPCTQMVNLNDCEYCQYHVQAQYKKVSSKRADLQSSYSGHVPKKMARGGNGLRERLCQDGFHYGGVSSMAYATTLASTTAPKKTVQSTLSNMVVRGAEAIALEARQQIAAARKNMVQSDEFKELMTLPTPGALNLKKHFSGVPTQANEKGGQPFQSISASALLKQQKQQMLGARKKRAEEIQKRFLESTEKSEKSSTLVSSERSVFQSPKQGAEFPNAQKMATPKLGRGFAEGEDVLFFDISPPAAKSNTSAQATKLAAIQKLQAKGQTLTKADPNSIKRKRSSSAEELVAQRVASHAPASTKSPDENEPAMKKHREQLAYLESKEFQKILNAKSKHTGILKEAEAEIQERYFDPLVKKEQLEEKMRSIREQECRVVTCKTCKYTHFKPKETCVSENHDFHWHNGVKRFFKCACGNRTISLDRLPKKHCSTCGLFKWERDGMLKEKTGPKIAGETLLPRGEEHGKFLNSH.

The N-terminal domain stretch occupies residues 1–145 (MEAVDADLEL…PMKSPDNKLL (145 aa)). Residues 15 to 26 (LEENEAAESNSV) are compositionally biased toward low complexity. Disordered regions lie at residues 15 to 65 (LEEN…VDGV) and 78 to 218 (DINE…VRSP). Acidic residues-rich tracts occupy residues 33–47 (SELD…GDED) and 55–65 (NGTEEQTVDGV). Positions 93 to 131 (SSVCQDKSKHELEDELRKMQEQMRKLQKQLQQTALAKTS) form a coiled coil. Basic and acidic residues predominate over residues 98–116 (DKSKHELEDELRKMQEQMR). The segment covering 120–130 (KQLQQTALAKT) has biased composition (low complexity). A compositionally biased stretch (polar residues) spans 179-211 (QDKSPLQKQMTSFLSPPDKSSTRPVSSTATQPV). The segment at 217–367 (SPVGQQYPVE…LMGDAVDLGT (151 aa)) is OB-fold domain. The zinc finger-like 1 stretch occupies residues 368-393 (CKARKKNGDPCTQMVNLNDCEYCQYH). 2 disordered regions span residues 564 to 586 (TEKS…SPKQ) and 643 to 688 (QTLT…PAMK). Over residues 570-580 (SSTLVSSERSV) the composition is skewed to low complexity. Zinc finger-like regions lie at residues 754–773 (CKTC…SENH) and 787–807 (CACG…CSTC).

The protein belongs to the MCM10 family. As to quaternary structure, self-associates.

Its subcellular location is the nucleus. Its function is as follows. Acts as a replication initiation factor that brings together the MCM2-7 helicase and the DNA polymerase alpha/primase complex in order to initiate DNA replication. Additionally, plays a role in preventing DNA damage during replication. The polypeptide is Protein MCM10 homolog (mcm10) (Xenopus tropicalis (Western clawed frog)).